Here is a 151-residue protein sequence, read N- to C-terminus: UPF0756 membrane protein Hore_21770 (151 aa).

The next 5 membrane-spanning stretches (helical) occupy residues 7-29, 49-69, 84-104, 110-130, and 131-151; these read LLII…GLLL, IEIG…LSPV, TVAI…LDLL, FILG…GIPV, and GPLM…IIKG.

It belongs to the UPF0756 family.

Its subcellular location is the cell membrane. In Halothermothrix orenii (strain H 168 / OCM 544 / DSM 9562), this protein is UPF0756 membrane protein Hore_21770.